The chain runs to 224 residues: 25 kDa integral membrane protein (224 aa).

Residues 1-12 (MKLSFTKVSLTN) lie on the Cytoplasmic side of the membrane. Residues 13–33 (ILILFNCLFIIFSMIVLTFGV) traverse the membrane as a helical segment. Residues 34 to 52 (IPQIYLLKFANILHGVRPS) are Extracellular-facing. The helical transmembrane segment at 53–73 (IFPIVCFTGSFVIIVACVGII) threads the bilayer. Residues 74 to 80 (GLMKGGK) are Cytoplasmic-facing. The helical transmembrane segment at 81 to 101 (CLLTMHIIALIIATIIDISTA) threads the bilayer. Residues 102–189 (TLSAIKQNEF…LNKYVRYYID (88 aa)) lie on the Extracellular side of the membrane. Asn120 carries N-linked (GlcNAc...) asparagine glycosylation. The chain crosses the membrane as a helical span at residues 190–210 (ILIYLCFIFGFIKLIYSLFTF). Topologically, residues 211 to 224 (TQRQRIFSEKTPVA) are cytoplasmic.

This sequence belongs to the tetraspanin (TM4SF) family.

Its subcellular location is the membrane. The chain is 25 kDa integral membrane protein from Schistosoma japonicum (Blood fluke).